The chain runs to 707 residues: Elongation factor G 2 (707 aa).

The region spanning 8 to 290 is the tr-type G domain; sequence ERYRNIGISA…AVIDYLPSPA (283 aa). Residues 17-24, 88-92, and 142-145 contribute to the GTP site; these read AHIDAGKT, DTPGH, and NKMD.

The protein belongs to the TRAFAC class translation factor GTPase superfamily. Classic translation factor GTPase family. EF-G/EF-2 subfamily.

Its subcellular location is the cytoplasm. Functionally, catalyzes the GTP-dependent ribosomal translocation step during translation elongation. During this step, the ribosome changes from the pre-translocational (PRE) to the post-translocational (POST) state as the newly formed A-site-bound peptidyl-tRNA and P-site-bound deacylated tRNA move to the P and E sites, respectively. Catalyzes the coordinated movement of the two tRNA molecules, the mRNA and conformational changes in the ribosome. The chain is Elongation factor G 2 from Bordetella bronchiseptica (strain ATCC BAA-588 / NCTC 13252 / RB50) (Alcaligenes bronchisepticus).